A 302-amino-acid chain; its full sequence is Sulfate adenylyltransferase subunit 2 (302 aa).

Residues 280-302 (RQGRLIDSDQSASMEQKKRQGYF) are disordered.

The protein belongs to the PAPS reductase family. CysD subfamily. As to quaternary structure, heterodimer composed of CysD, the smaller subunit, and CysN.

It carries out the reaction sulfate + ATP + H(+) = adenosine 5'-phosphosulfate + diphosphate. The protein operates within sulfur metabolism; hydrogen sulfide biosynthesis; sulfite from sulfate: step 1/3. In terms of biological role, with CysN forms the ATP sulfurylase (ATPS) that catalyzes the adenylation of sulfate producing adenosine 5'-phosphosulfate (APS) and diphosphate, the first enzymatic step in sulfur assimilation pathway. APS synthesis involves the formation of a high-energy phosphoric-sulfuric acid anhydride bond driven by GTP hydrolysis by CysN coupled to ATP hydrolysis by CysD. The chain is Sulfate adenylyltransferase subunit 2 from Shewanella sp. (strain ANA-3).